Consider the following 213-residue polypeptide: N-(5'-phosphoribosyl)anthranilate isomerase (213 aa).

This sequence belongs to the TrpF family.

It carries out the reaction N-(5-phospho-beta-D-ribosyl)anthranilate = 1-(2-carboxyphenylamino)-1-deoxy-D-ribulose 5-phosphate. Its pathway is amino-acid biosynthesis; L-tryptophan biosynthesis; L-tryptophan from chorismate: step 3/5. The protein is N-(5'-phosphoribosyl)anthranilate isomerase of Rhodopseudomonas palustris (strain TIE-1).